Here is a 215-residue protein sequence, read N- to C-terminus: UPF0323 lipoprotein HP_0232 (215 aa).

The first 27 residues, 1-27 (MKKPYRKISDYAIVGGLSALVMVSIVG), serve as a signal peptide directing secretion. Residue Cys-28 is the site of N-palmitoyl cysteine attachment. Cys-28 is lipidated: S-diacylglycerol cysteine. A compositionally biased stretch (polar residues) spans 158 to 169 (QRTYKSPQAYQR). The tract at residues 158–215 (QRTYKSPQAYQRSQNSFSKSAPSASSMGGASKGQSGFFGSSRPTSSPAVSSGTRGFNS) is disordered. Positions 170–208 (SQNSFSKSAPSASSMGGASKGQSGFFGSSRPTSSPAVSS) are enriched in low complexity.

It belongs to the UPF0323 family.

The protein resides in the cell membrane. In Helicobacter pylori (strain ATCC 700392 / 26695) (Campylobacter pylori), this protein is UPF0323 lipoprotein HP_0232.